We begin with the raw amino-acid sequence, 242 residues long: MLPFWIALQFLSSLPIRLPGMPQPQELGRSLLFYPVVGVLFGVLLWALSTALMGAPLLLHAALLLTAWVLLSGGLHLDGLADSADAWLGGFGDRERTLAIMKDPRSGPIAVVTLGLVLLLKFTALVALIEQQNGAALILAPLIGRASMLALFLTTRYVRAGGLGQALSDHLPRIVGQQVLILSGLACILIGGFSGGVAVLLAAICFIGLRQLMVNRLGGTTGDTAGALLELLEVAVLVGLAL.

A run of 5 helical transmembrane segments spans residues 31–51, 52–72, 109–129, 134–154, and 188–208; these read LLFY…LSTA, LMGA…VLLS, IAVV…VALI, GAAL…LFLT, and ILIG…CFIG.

This sequence belongs to the CobS family. Requires Mg(2+) as cofactor.

The protein resides in the cell inner membrane. The enzyme catalyses alpha-ribazole + adenosylcob(III)inamide-GDP = adenosylcob(III)alamin + GMP + H(+). It carries out the reaction alpha-ribazole 5'-phosphate + adenosylcob(III)inamide-GDP = adenosylcob(III)alamin 5'-phosphate + GMP + H(+). It functions in the pathway cofactor biosynthesis; adenosylcobalamin biosynthesis; adenosylcobalamin from cob(II)yrinate a,c-diamide: step 7/7. Functionally, joins adenosylcobinamide-GDP and alpha-ribazole to generate adenosylcobalamin (Ado-cobalamin). Also synthesizes adenosylcobalamin 5'-phosphate from adenosylcobinamide-GDP and alpha-ribazole 5'-phosphate. The protein is Adenosylcobinamide-GDP ribazoletransferase of Pseudomonas fluorescens (strain SBW25).